The primary structure comprises 246 residues: MVKILGVIPARYASSRFPGKPLVKIGDKTMIEWTYRNASRSTALSELVVATDDTRIHEVVQGFGGNSVMTRADHISGTDRIIEVANLFSEYSIIINIQGDEPGIEPELIDGVAGLKASHPEWKMSTAAVPLIDFSHGEDPNRVKVIIDRNGKAIYFSRSLIPSQFKQTVPLYRHLGIYGYDRDFLLKYNSLPKSNLEESESLEQLRAIEAGYGIGVYLAQEAGLSVDTPADLEVVIEDFKKRKWIT.

This sequence belongs to the KdsB family.

It is found in the cytoplasm. It catalyses the reaction 3-deoxy-alpha-D-manno-oct-2-ulosonate + CTP = CMP-3-deoxy-beta-D-manno-octulosonate + diphosphate. Its pathway is nucleotide-sugar biosynthesis; CMP-3-deoxy-D-manno-octulosonate biosynthesis; CMP-3-deoxy-D-manno-octulosonate from 3-deoxy-D-manno-octulosonate and CTP: step 1/1. It participates in bacterial outer membrane biogenesis; lipopolysaccharide biosynthesis. In terms of biological role, activates KDO (a required 8-carbon sugar) for incorporation into bacterial lipopolysaccharide in Gram-negative bacteria. The chain is 3-deoxy-manno-octulosonate cytidylyltransferase from Leptospira borgpetersenii serovar Hardjo-bovis (strain JB197).